A 255-amino-acid polypeptide reads, in one-letter code: uncharacterized protein (255 aa).

Residues asparagine 16 and asparagine 58 are each glycosylated (N-linked (GlcNAc...) asparagine; by host). 2 helical membrane-spanning segments follow: residues 72 to 92 and 104 to 124; these read LIYS…TIYY and LWYI…SHIC.

Its subcellular location is the membrane. This is an uncharacterized protein from Acanthamoeba polyphaga (Amoeba).